The sequence spans 483 residues: Cysteine proteinase 1, mitochondrial (483 aa).

Residues 1-30 (MLPTSVSRSLYLKTFRSHLLRAPQIVLKRM) constitute a mitochondrion transit peptide. Active-site residues include cysteine 102, histidine 398, and asparagine 421. A propeptide (removed in mature form; by autocatalysis) is located at residue lysine 483.

The protein belongs to the peptidase C1 family. Homohexamer. Binds to nucleic acids. Binds single-stranded DNA and RNA with higher affinity than double-stranded DNA. In terms of processing, the N-terminus of isoform Cytoplasmic is blocked.

It localises to the mitochondrion. It is found in the cytoplasm. It catalyses the reaction Inactivates bleomycin B2 (a cytotoxic glycometallopeptide) by hydrolysis of a carboxyamide bond of beta-aminoalanine, but also shows general aminopeptidase activity. The specificity varies somewhat with source, but amino acid arylamides of Met, Leu and Ala are preferred.. Inhibited by E64, a specific inhibitor of cysteine proteases, N-ethylmaleimide, iodacetamide, and mercury and zinc ions. Its function is as follows. The normal physiological role of the enzyme is unknown, but it is not essential for the viability of yeast cells. Has aminopeptidase activity, shortening substrate peptides sequentially by 1 amino acid. Has bleomycin hydrolase activity, which can protect the cell from the toxic effects of bleomycin. Has homocysteine-thiolactonase activity, protecting the cell against homocysteine toxicity. Acts as a repressor in the GAL4 regulatory system, but this does not require either the peptidase or nucleic acid-binding activities. The sequence is that of Cysteine proteinase 1, mitochondrial (LAP3) from Saccharomyces cerevisiae (strain JAY291) (Baker's yeast).